Here is a 98-residue protein sequence, read N- to C-terminus: ESAT-6-like protein EsxJ (98 aa).

This sequence belongs to the WXG100 family. CFP-10 subfamily.

It is found in the secreted. The chain is ESAT-6-like protein EsxJ from Mycobacterium bovis (strain ATCC BAA-935 / AF2122/97).